A 190-amino-acid chain; its full sequence is Peptidyl-tRNA hydrolase (190 aa).

Position 19 (Tyr-19) interacts with tRNA. The active-site Proton acceptor is the His-24. The tRNA site is built by Tyr-72, Asn-74, and Asn-121.

This sequence belongs to the PTH family.

Its subcellular location is the mitochondrion. The catalysed reaction is an N-acyl-L-alpha-aminoacyl-tRNA + H2O = an N-acyl-L-amino acid + a tRNA + H(+). In terms of biological role, peptidyl-tRNA hydrolase involved in the recycling of tRNA-Lys from diacetyl-lysyl-tRNA-Lys and is important for mitochondrial function. This chain is Peptidyl-tRNA hydrolase (PTH1), found in Saccharomyces cerevisiae (strain ATCC 204508 / S288c) (Baker's yeast).